A 353-amino-acid chain; its full sequence is Photosystem II protein D1 (353 aa).

T2 bears the N-acetylthreonine mark. At T2 the chain carries Phosphothreonine. The next 3 membrane-spanning stretches (helical) occupy residues 29-46 (YIGW…TATS), 118-133 (HFLL…EWEL), and 142-156 (WIAV…AATA). H118 contributes to the chlorophyll a binding site. Residue Y126 participates in pheophytin a binding. [CaMn4O5] cluster is bound by residues D170 and E189. A helical transmembrane segment spans residues 197 to 218 (FHMLGVAGVFGGSLFSAMHGSL). Chlorophyll a is bound at residue H198. A quinone contacts are provided by residues H215 and 264-265 (SF). H215 provides a ligand contact to Fe cation. H272 lines the Fe cation pocket. A helical membrane pass occupies residues 274–288 (FLAAWPVVGIWFTAL). Positions 332, 333, 342, and 344 each coordinate [CaMn4O5] cluster. The propeptide occupies 345 to 353 (AVEAPSTNG).

The protein belongs to the reaction center PufL/M/PsbA/D family. PSII is composed of 1 copy each of membrane proteins PsbA, PsbB, PsbC, PsbD, PsbE, PsbF, PsbH, PsbI, PsbJ, PsbK, PsbL, PsbM, PsbT, PsbX, PsbY, PsbZ, Psb30/Ycf12, at least 3 peripheral proteins of the oxygen-evolving complex and a large number of cofactors. It forms dimeric complexes. The D1/D2 heterodimer binds P680, chlorophylls that are the primary electron donor of PSII, and subsequent electron acceptors. It shares a non-heme iron and each subunit binds pheophytin, quinone, additional chlorophylls, carotenoids and lipids. D1 provides most of the ligands for the Mn4-Ca-O5 cluster of the oxygen-evolving complex (OEC). There is also a Cl(-1) ion associated with D1 and D2, which is required for oxygen evolution. The PSII complex binds additional chlorophylls, carotenoids and specific lipids. is required as a cofactor. Post-translationally, tyr-161 forms a radical intermediate that is referred to as redox-active TyrZ, YZ or Y-Z. In terms of processing, C-terminally processed by CTPA; processing is essential to allow assembly of the oxygen-evolving complex and thus photosynthetic growth.

The protein resides in the plastid. It is found in the chloroplast thylakoid membrane. It catalyses the reaction 2 a plastoquinone + 4 hnu + 2 H2O = 2 a plastoquinol + O2. In terms of biological role, photosystem II (PSII) is a light-driven water:plastoquinone oxidoreductase that uses light energy to abstract electrons from H(2)O, generating O(2) and a proton gradient subsequently used for ATP formation. It consists of a core antenna complex that captures photons, and an electron transfer chain that converts photonic excitation into a charge separation. The D1/D2 (PsbA/PsbD) reaction center heterodimer binds P680, the primary electron donor of PSII as well as several subsequent electron acceptors. This chain is Photosystem II protein D1, found in Nymphaea alba (White water-lily).